A 412-amino-acid polypeptide reads, in one-letter code: L-cysteine:1D-myo-inositol 2-amino-2-deoxy-alpha-D-glucopyranoside ligase (412 aa).

The disordered stretch occupies residues 1–30; sequence MQTWSSPSVPKLRGAPRPLRLHDTATGEVR. Residue C43 coordinates Zn(2+). Residues 43–46, T58, and 81–83 each bind L-cysteinyl-5'-AMP; these read CGIT and NVT. The 'HIGH' region motif lies at 45–55; it reads ITPYDATHLGH. The 'ERGGDP' region motif lies at 187-192; sequence ERGGDP. W227 provides a ligand contact to L-cysteinyl-5'-AMP. C231 provides a ligand contact to Zn(2+). 249–251 lines the L-cysteinyl-5'-AMP pocket; that stretch reads GSD. H256 is a binding site for Zn(2+). I283 serves as a coordination point for L-cysteinyl-5'-AMP. The 'KMSKS' region motif lies at 289 to 293; the sequence is KMSKS.

The protein belongs to the class-I aminoacyl-tRNA synthetase family. MshC subfamily. Monomer. Requires Zn(2+) as cofactor.

The catalysed reaction is 1D-myo-inositol 2-amino-2-deoxy-alpha-D-glucopyranoside + L-cysteine + ATP = 1D-myo-inositol 2-(L-cysteinylamino)-2-deoxy-alpha-D-glucopyranoside + AMP + diphosphate + H(+). Catalyzes the ATP-dependent condensation of GlcN-Ins and L-cysteine to form L-Cys-GlcN-Ins. In Actinosynnema mirum (strain ATCC 29888 / DSM 43827 / JCM 3225 / NBRC 14064 / NCIMB 13271 / NRRL B-12336 / IMRU 3971 / 101), this protein is L-cysteine:1D-myo-inositol 2-amino-2-deoxy-alpha-D-glucopyranoside ligase.